Here is a 450-residue protein sequence, read N- to C-terminus: tRNA-2-methylthio-N(6)-dimethylallyladenosine synthase (450 aa).

The 119-residue stretch at 14–132 (GEFFIETWGC…FPNYLNEVKK (119 aa)) folds into the MTTase N-terminal domain. Residues Cys23, Cys59, Cys93, Cys169, Cys173, and Cys176 each contribute to the [4Fe-4S] cluster site. In terms of domain architecture, Radical SAM core spans 155-385 (RKNSMKAFVT…VEVVNEISAK (231 aa)). In terms of domain architecture, TRAM spans 388 to 450 (KAYEGKIEEV…NSFSLTGEEI (63 aa)).

It belongs to the methylthiotransferase family. MiaB subfamily. As to quaternary structure, monomer. It depends on [4Fe-4S] cluster as a cofactor.

The protein resides in the cytoplasm. The enzyme catalyses N(6)-dimethylallyladenosine(37) in tRNA + (sulfur carrier)-SH + AH2 + 2 S-adenosyl-L-methionine = 2-methylsulfanyl-N(6)-dimethylallyladenosine(37) in tRNA + (sulfur carrier)-H + 5'-deoxyadenosine + L-methionine + A + S-adenosyl-L-homocysteine + 2 H(+). Its function is as follows. Catalyzes the methylthiolation of N6-(dimethylallyl)adenosine (i(6)A), leading to the formation of 2-methylthio-N6-(dimethylallyl)adenosine (ms(2)i(6)A) at position 37 in tRNAs that read codons beginning with uridine. In Clostridium botulinum (strain Langeland / NCTC 10281 / Type F), this protein is tRNA-2-methylthio-N(6)-dimethylallyladenosine synthase.